Reading from the N-terminus, the 351-residue chain is MNKFYYICIYINILYVCVSGHGYMTFPIARQRRCSVRGGQWWPPNGDGITDTMCRAAYQNVYNKVLNQYNDPQEAATAAQYMFQQDNEYAALAGPDYTNLCNLQQNVVPNNLCAAGADDWDVVPFGDKSGMDLPGNWVPTVIPLDSNHQSSVALELEFCPTAVHDPSYYEVYITNSGFNVHTDNVVWGNLELIFNDTVPLRPKSSTSTCNANPNVYRFTVSIPVRPAQFVLYVRWQRIDPVGEGFYNCVDMAFDYAAGPSEEDVIYPDYEAPGQNAYTCHANRNKYGGNYENTIDEDKYQAQLDESIKSRYDKYSRHKGGKFGQKQCNGNKHHYNKYTKYYNQNYKNNKNY.

An N-terminal signal peptide occupies residues 1–20 (MNKFYYICIYINILYVCVSG).

As to quaternary structure, homodimer; disulfide-linked.

This protein is a spindle body protein. This is Spindolin from Lepidoptera (butterflies and moths).